The chain runs to 37 residues: Large ribosomal subunit protein bL36A (37 aa).

Belongs to the bacterial ribosomal protein bL36 family.

The polypeptide is Large ribosomal subunit protein bL36A (Kocuria rhizophila (strain ATCC 9341 / DSM 348 / NBRC 103217 / DC2201)).